The chain runs to 131 residues: UPF0102 protein YraN (131 aa).

The span at 1-19 shows a compositional bias: polar residues; it reads MATVPTRSGSPRQLTTKQT. A disordered region spans residues 1–21; that stretch reads MATVPTRSGSPRQLTTKQTGD.

Belongs to the UPF0102 family.

The sequence is that of UPF0102 protein YraN from Escherichia coli (strain K12 / MC4100 / BW2952).